A 136-amino-acid polypeptide reads, in one-letter code: Acidic phospholipase A2 EC-I (136 aa).

Positions 1–16 are cleaved as a signal peptide; the sequence is MKTLWIVAVWLIAVEG. 7 disulfide bridges follow: C42-C129, C44-C60, C59-C111, C65-C136, C66-C104, C73-C97, and C91-C102. Positions 43, 45, and 47 each coordinate Ca(2+). H63 is a catalytic residue. Residue D64 participates in Ca(2+) binding. D105 is a catalytic residue. Positions 112–133 are may be responsible for inhibition of the platelet-aggregation activity; sequence LGENVNTYDKKYKSYEDCTEEV.

Belongs to the phospholipase A2 family. Group II subfamily. D49 sub-subfamily. In terms of assembly, monomer. Ca(2+) is required as a cofactor. As to expression, expressed by the venom gland.

The protein resides in the secreted. The catalysed reaction is a 1,2-diacyl-sn-glycero-3-phosphocholine + H2O = a 1-acyl-sn-glycero-3-phosphocholine + a fatty acid + H(+). Snake venom phospholipase A2 (PLA2) that inhibits human platelet aggregation induced by ADP, collagen and epinephrin (possibly by binding the platelet receptor alpha-IIb/beta-III) and induces mild edema in the foot pads of mice. PLA2 catalyzes the calcium-dependent hydrolysis of the 2-acyl groups in 3-sn-phosphoglycerides. The polypeptide is Acidic phospholipase A2 EC-I (Echis carinatus (Saw-scaled viper)).